Reading from the N-terminus, the 54-residue chain is UPF0391 membrane protein Aave_3864 (54 aa).

The next 2 membrane-spanning stretches (helical) occupy residues 5 to 25 and 28 to 48; these read AVVF…GIAA and VGIA…TFVL.

This sequence belongs to the UPF0391 family.

It localises to the cell membrane. The protein is UPF0391 membrane protein Aave_3864 of Paracidovorax citrulli (strain AAC00-1) (Acidovorax citrulli).